The primary structure comprises 249 residues: tRNA pseudouridine synthase A (249 aa).

Residue D52 is the Nucleophile of the active site. Residue Y110 coordinates substrate.

Belongs to the tRNA pseudouridine synthase TruA family. In terms of assembly, homodimer.

The catalysed reaction is uridine(38/39/40) in tRNA = pseudouridine(38/39/40) in tRNA. In terms of biological role, formation of pseudouridine at positions 38, 39 and 40 in the anticodon stem and loop of transfer RNAs. This is tRNA pseudouridine synthase A from Exiguobacterium sibiricum (strain DSM 17290 / CCUG 55495 / CIP 109462 / JCM 13490 / 255-15).